Here is a 286-residue protein sequence, read N- to C-terminus: tRNA (guanine-N(7)-)-methyltransferase (286 aa).

A disordered region spans residues 1-22 (MGRARPKSQKRGDYRVSRSQEN). Residues G104, 127-128 (EI), 162-163 (NS), and C182 contribute to the S-adenosyl-L-methionine site. Residue D185 is part of the active site. Position 260–262 (260–262 (TEE)) interacts with S-adenosyl-L-methionine.

This sequence belongs to the class I-like SAM-binding methyltransferase superfamily. TrmB family. In terms of assembly, forms a complex with TRM82.

The protein localises to the nucleus. The catalysed reaction is guanosine(46) in tRNA + S-adenosyl-L-methionine = N(7)-methylguanosine(46) in tRNA + S-adenosyl-L-homocysteine. The protein operates within tRNA modification; N(7)-methylguanine-tRNA biosynthesis. Functionally, catalyzes the formation of N(7)-methylguanine at position 46 (m7G46) in tRNA. This Colletotrichum orbiculare (strain 104-T / ATCC 96160 / CBS 514.97 / LARS 414 / MAFF 240422) (Cucumber anthracnose fungus) protein is tRNA (guanine-N(7)-)-methyltransferase.